Consider the following 100-residue polypeptide: Urease subunit gamma (100 aa).

Belongs to the urease gamma subunit family. In terms of assembly, heterotrimer of UreA (gamma), UreB (beta) and UreC (alpha) subunits. Three heterotrimers associate to form the active enzyme.

Its subcellular location is the cytoplasm. The enzyme catalyses urea + 2 H2O + H(+) = hydrogencarbonate + 2 NH4(+). It participates in nitrogen metabolism; urea degradation; CO(2) and NH(3) from urea (urease route): step 1/1. The polypeptide is Urease subunit gamma (Corynebacterium urealyticum (strain ATCC 43042 / DSM 7109)).